A 427-amino-acid chain; its full sequence is Adenylosuccinate synthetase (427 aa).

Residues 12 to 18 (GDEGKGK) and 40 to 42 (GHT) contribute to the GTP site. The active-site Proton acceptor is D13. Positions 13 and 40 each coordinate Mg(2+). IMP-binding positions include 13-16 (DEGK), 38-41 (NAGH), T126, R140, Q221, T236, and R299. The active-site Proton donor is H41. A substrate-binding site is contributed by 295–301 (STTKRPR). GTP contacts are provided by residues R301, 327-329 (KLD), and 409-411 (SVG).

It belongs to the adenylosuccinate synthetase family. As to quaternary structure, homodimer. It depends on Mg(2+) as a cofactor.

Its subcellular location is the cytoplasm. It catalyses the reaction IMP + L-aspartate + GTP = N(6)-(1,2-dicarboxyethyl)-AMP + GDP + phosphate + 2 H(+). It participates in purine metabolism; AMP biosynthesis via de novo pathway; AMP from IMP: step 1/2. In terms of biological role, plays an important role in the de novo pathway of purine nucleotide biosynthesis. Catalyzes the first committed step in the biosynthesis of AMP from IMP. The sequence is that of Adenylosuccinate synthetase from Borrelia duttonii (strain Ly).